A 436-amino-acid chain; its full sequence is Trigger factor (436 aa).

The PPIase FKBP-type domain maps to 161–246 (GDQLNIDFVG…VNSVSAPQLP (86 aa)).

Belongs to the FKBP-type PPIase family. Tig subfamily.

The protein resides in the cytoplasm. The enzyme catalyses [protein]-peptidylproline (omega=180) = [protein]-peptidylproline (omega=0). Its function is as follows. Involved in protein export. Acts as a chaperone by maintaining the newly synthesized protein in an open conformation. Functions as a peptidyl-prolyl cis-trans isomerase. This chain is Trigger factor, found in Ectopseudomonas mendocina (strain ymp) (Pseudomonas mendocina).